Here is an 871-residue protein sequence, read N- to C-terminus: Translation initiation factor IF-2 (871 aa).

2 disordered regions span residues 60–101 (KKNI…QEVK) and 184–203 (ESLK…KKES). The segment covering 61–72 (KNIKTPTAKKPK) has biased composition (basic residues). A compositionally biased stretch (basic and acidic residues) spans 73–101 (KENIKEQEKLNESEKKEPKKEEKLKQEVK). Residues 370–537 (TRAPVITIMG…IVLLQADILE (168 aa)) enclose the tr-type G domain. The G1 stretch occupies residues 379 to 386 (GHVDHGKT). GTP is bound at residue 379-386 (GHVDHGKT). The tract at residues 404–408 (GITQH) is G2. Positions 425–428 (DTPG) are G3. GTP-binding positions include 425–429 (DTPGH) and 479–482 (NKMD). The tract at residues 479–482 (NKMD) is G4. Positions 515 to 517 (SAK) are G5.

It belongs to the TRAFAC class translation factor GTPase superfamily. Classic translation factor GTPase family. IF-2 subfamily.

It is found in the cytoplasm. Functionally, one of the essential components for the initiation of protein synthesis. Protects formylmethionyl-tRNA from spontaneous hydrolysis and promotes its binding to the 30S ribosomal subunits. Also involved in the hydrolysis of GTP during the formation of the 70S ribosomal complex. This Campylobacter jejuni subsp. jejuni serotype O:6 (strain 81116 / NCTC 11828) protein is Translation initiation factor IF-2.